We begin with the raw amino-acid sequence, 296 residues long: 4-hydroxybenzoate octaprenyltransferase (296 aa).

A run of 8 helical transmembrane segments spans residues 28 to 48, 52 to 72, 102 to 122, 146 to 166, 169 to 189, 219 to 239, 241 to 261, and 275 to 295; these read PIGI…AGKG, LINI…GCVI, ALVF…LTNA, YYPQ…AFTA, GDLP…TVGY, VIIL…GARF, LGGW…WEFW, and FLHN…DYAF.

This sequence belongs to the UbiA prenyltransferase family. Requires Mg(2+) as cofactor.

It localises to the cell inner membrane. It catalyses the reaction all-trans-octaprenyl diphosphate + 4-hydroxybenzoate = 4-hydroxy-3-(all-trans-octaprenyl)benzoate + diphosphate. It participates in cofactor biosynthesis; ubiquinone biosynthesis. Its function is as follows. Catalyzes the prenylation of para-hydroxybenzoate (PHB) with an all-trans polyprenyl group. Mediates the second step in the final reaction sequence of ubiquinone-8 (UQ-8) biosynthesis, which is the condensation of the polyisoprenoid side chain with PHB, generating the first membrane-bound Q intermediate 3-octaprenyl-4-hydroxybenzoate. This Pseudomonas fluorescens (strain SBW25) protein is 4-hydroxybenzoate octaprenyltransferase.